A 101-amino-acid polypeptide reads, in one-letter code: uncharacterized protein (101 aa).

The protein resides in the mitochondrion. This is an uncharacterized protein from Arabidopsis thaliana (Mouse-ear cress).